The sequence spans 497 residues: Lysophospholipid acyltransferase 5 (497 aa).

The next 6 helical transmembrane spans lie at 31–51 (LLTILAGYPVAALYQKFISVI), 74–94 (GLDTYHSLIAILTTYFLVLLL), 100–120 (IFLAINFVFHMSYLLLGYFYT), 173–193 (LELLAFSYFPSGFLVGPQFPF), 213–235 (AGVRRFGAGAFYLIVCQVGLRYL), and 264–286 (SLYKYISCWLLTEGALICIGLTY). Residues N322 and H358 contribute to the active site. A helical membrane pass occupies residues 339–361 (FLNNRTISYGAALGFLAVWHGYH). N-linked (GlcNAc...) asparagine glycosylation occurs at N398. 2 consecutive transmembrane segments (helical) span residues 408-428 (FITLKSYNVVYMGWCLTAFVF) and 435-455 (IVVYGAVSYYGFTFLVLWAAF). A disordered region spans residues 469 to 497 (KLAGEDQKLQDSNTDKLVEEKKPEDKKSE). Over residues 470-497 (LAGEDQKLQDSNTDKLVEEKKPEDKKSE) the composition is skewed to basic and acidic residues. At S480 the chain carries Phosphoserine.

It belongs to the membrane-bound acyltransferase family. During gastrulation, expressed mainly along the midline in the presumptive mesoderm. During germ band elongation, expressed in mesoderm and endoderm primordia and in the cephalic furrow. Expression in mesoderm and endoderm lineages continues during germ band shortening. At the end of this process, no longer detected in somatic mesoderm or endoderm layer with expression restricted to anterior and posterior domains of the visceral mesoderm.

Its subcellular location is the endoplasmic reticulum. The protein localises to the membrane. It carries out the reaction a 1-acyl-sn-glycero-3-phospho-L-serine + an acyl-CoA = a 1,2-diacyl-sn-glycero-3-phospho-L-serine + CoA. The enzyme catalyses 1-(9Z-octadecenoyl)-sn-glycero-3-phospho-L-serine + (9Z)-hexadecenoyl-CoA = 1-(9Z-octadecenoyl)-2-(9Z-hexadecenoyl)-sn-glycero-3-phospho-L-serine + CoA. It catalyses the reaction a 1-acyl-sn-glycero-3-phosphocholine + an acyl-CoA = a 1,2-diacyl-sn-glycero-3-phosphocholine + CoA. The catalysed reaction is 1-hexadecanoyl-sn-glycero-3-phosphocholine + (9Z)-octadecenoyl-CoA = 1-hexadecanoyl-2-(9Z-octadecenoyl)-sn-glycero-3-phosphocholine + CoA. It carries out the reaction (9Z,12Z)-octadecadienoyl-CoA + 1-hexadecanoyl-sn-glycero-3-phosphocholine = 1-hexadecanoyl-2-(9Z,12Z-octadecadienoyl)-sn-glycero-3-phosphocholine + CoA. The enzyme catalyses (5Z,8Z,11Z,14Z)-eicosatetraenoyl-CoA + 1-hexadecanoyl-sn-glycero-3-phosphocholine = 1-hexadecanoyl-2-(5Z,8Z,11Z,14Z-eicosatetraenoyl)-sn-glycero-3-phosphocholine + CoA. It catalyses the reaction (9Z)-hexadecenoyl-CoA + 1-hexadecanoyl-sn-glycero-3-phosphocholine = 1-hexadecanoyl-2-(9Z-hexadecenoyl)-sn-glycero-3-phosphocholine + CoA. The protein operates within lipid metabolism; phospholipid metabolism. In terms of biological role, acyltransferase that mediates the acylation of lysophospholipids to produce phospholipids (glycerophospholipids). Highest activity with lysophosphatidylcholine (1-acyl-sn-glycero-3-phosphocholine or LPC) producing phosphatidylcholine (1,2-diacyl-sn-glycero-3-phosphocholine or PC) (LPCAT activity), but also converts lysophosphatidylserine (1-acyl-2-hydroxy-sn-glycero-3-phospho-L-serine or LPS) to phosphatidylserine (1,2-diacyl-sn-glycero-3-phospho-L-serine or PS) (LPSAT activity). Has a preference for unsaturated fatty acids of at least 16 carbons such as oleoyl-CoA ((9Z)-octadecenoyl-CoA) and palmitoleoyl-CoA ((9Z)-hexadecenoyl-CoA). Glycerophospholipids are important structural and functional components of cellular membrane, acyl-chain remodeling regulates the molecular species distribution of glycerophospholipids which can affect membrane fluidity and curvature. Essential for fertility and viability together with Oysgedart (Oys). Required for germ cells to migrate into the mesoderm. This is Lysophospholipid acyltransferase 5 from Drosophila melanogaster (Fruit fly).